The chain runs to 329 residues: 4-hydroxythreonine-4-phosphate dehydrogenase (329 aa).

The substrate site is built by H136 and T137. A divalent metal cation-binding residues include H166, H211, and H266. K274, N283, and R292 together coordinate substrate.

It belongs to the PdxA family. As to quaternary structure, homodimer. The cofactor is Zn(2+). Mg(2+) serves as cofactor. Co(2+) is required as a cofactor.

The protein localises to the cytoplasm. It catalyses the reaction 4-(phosphooxy)-L-threonine + NAD(+) = 3-amino-2-oxopropyl phosphate + CO2 + NADH. It functions in the pathway cofactor biosynthesis; pyridoxine 5'-phosphate biosynthesis; pyridoxine 5'-phosphate from D-erythrose 4-phosphate: step 4/5. In terms of biological role, catalyzes the NAD(P)-dependent oxidation of 4-(phosphooxy)-L-threonine (HTP) into 2-amino-3-oxo-4-(phosphooxy)butyric acid which spontaneously decarboxylates to form 3-amino-2-oxopropyl phosphate (AHAP). The sequence is that of 4-hydroxythreonine-4-phosphate dehydrogenase from Pseudomonas syringae pv. tomato (strain ATCC BAA-871 / DC3000).